Here is a 383-residue protein sequence, read N- to C-terminus: 4-hydroxy-3-methylbut-2-en-1-yl diphosphate synthase (flavodoxin) (383 aa).

Residues Cys-277, Cys-280, Cys-312, and Glu-319 each coordinate [4Fe-4S] cluster.

This sequence belongs to the IspG family. It depends on [4Fe-4S] cluster as a cofactor.

It catalyses the reaction (2E)-4-hydroxy-3-methylbut-2-enyl diphosphate + oxidized [flavodoxin] + H2O + 2 H(+) = 2-C-methyl-D-erythritol 2,4-cyclic diphosphate + reduced [flavodoxin]. The protein operates within isoprenoid biosynthesis; isopentenyl diphosphate biosynthesis via DXP pathway; isopentenyl diphosphate from 1-deoxy-D-xylulose 5-phosphate: step 5/6. Converts 2C-methyl-D-erythritol 2,4-cyclodiphosphate (ME-2,4cPP) into 1-hydroxy-2-methyl-2-(E)-butenyl 4-diphosphate. The chain is 4-hydroxy-3-methylbut-2-en-1-yl diphosphate synthase (flavodoxin) from Caulobacter vibrioides (strain ATCC 19089 / CIP 103742 / CB 15) (Caulobacter crescentus).